Reading from the N-terminus, the 217-residue chain is MNATTAPLPYSAARLHELAQLLIGNIRELAQAGWTPATSSNFSHRLDEQHAAITVSGRDKGRLVEEDIMVVDFDGQPVGRPLRPSAETLLHTQLYRRFPEIGCVLHTHSPVQTIASRLYAGSGVIRLEGYELLKAFEGNTTHETAVDVPVFANTQDMQVLAAQVEALLDKQSMWGYLIEGHGLYAWGRNMAEARRHLEAFEFLLHCELELLKLRSPR.

Zn(2+)-binding residues include His-106 and His-108.

The protein belongs to the aldolase class II family. MtnB subfamily. Requires Zn(2+) as cofactor.

The catalysed reaction is 5-(methylsulfanyl)-D-ribulose 1-phosphate = 5-methylsulfanyl-2,3-dioxopentyl phosphate + H2O. Its pathway is amino-acid biosynthesis; L-methionine biosynthesis via salvage pathway; L-methionine from S-methyl-5-thio-alpha-D-ribose 1-phosphate: step 2/6. Catalyzes the dehydration of methylthioribulose-1-phosphate (MTRu-1-P) into 2,3-diketo-5-methylthiopentyl-1-phosphate (DK-MTP-1-P). In Xanthomonas campestris pv. campestris (strain 8004), this protein is Methylthioribulose-1-phosphate dehydratase.